The primary structure comprises 438 residues: Glutamate-1-semialdehyde 2,1-aminomutase (438 aa).

An N6-(pyridoxal phosphate)lysine modification is found at K272.

Belongs to the class-III pyridoxal-phosphate-dependent aminotransferase family. HemL subfamily. Homodimer. Pyridoxal 5'-phosphate serves as cofactor.

The protein resides in the cytoplasm. It catalyses the reaction (S)-4-amino-5-oxopentanoate = 5-aminolevulinate. It functions in the pathway porphyrin-containing compound metabolism; protoporphyrin-IX biosynthesis; 5-aminolevulinate from L-glutamyl-tRNA(Glu): step 2/2. The protein operates within porphyrin-containing compound metabolism; chlorophyll biosynthesis. The chain is Glutamate-1-semialdehyde 2,1-aminomutase from Chloroflexus aggregans (strain MD-66 / DSM 9485).